The chain runs to 137 residues: uncharacterized protein (137 aa).

A run of 2 helical transmembrane segments spans residues Leu36–Leu52 and Phe113–Phe129.

It localises to the membrane. This is an uncharacterized protein from Saccharomyces cerevisiae (strain ATCC 204508 / S288c) (Baker's yeast).